The chain runs to 246 residues: MPRYKLTIEYDGSPFVGWQAQTNGRSVQQVLEEGIKGFCGQELKIFGAGRTDAGVHALGQVAHVDFETPVAPDTLRDAVNAHMRPHPVAIVEAEEVPDSFEARFSAVKRHYMYRIVNRRAPLTLDRGQAWLVHKTLDADAMHDAAQALVGNHDFTTFRSVQCQAKSPVKTVDEISVSRYADEIEIVCRARSFLHNQVRSFVGTLKMVGDGSWTRRKVEKALAAKDRAACGPVAPPDGLYLLQVDYE.

The active-site Nucleophile is aspartate 52. Tyrosine 111 provides a ligand contact to substrate.

This sequence belongs to the tRNA pseudouridine synthase TruA family. As to quaternary structure, homodimer.

It carries out the reaction uridine(38/39/40) in tRNA = pseudouridine(38/39/40) in tRNA. Formation of pseudouridine at positions 38, 39 and 40 in the anticodon stem and loop of transfer RNAs. The polypeptide is tRNA pseudouridine synthase A (Parvibaculum lavamentivorans (strain DS-1 / DSM 13023 / NCIMB 13966)).